A 359-amino-acid chain; its full sequence is Protein RecA (359 aa).

64 to 71 (GHESSGKT) is an ATP binding site. The segment at 328–359 (NKYPNKDSNDSPKEGSKIKTKVNPAVTQDELI) is disordered. The segment covering 331 to 344 (PNKDSNDSPKEGSK) has biased composition (basic and acidic residues).

Belongs to the RecA family.

It localises to the cytoplasm. Can catalyze the hydrolysis of ATP in the presence of single-stranded DNA, the ATP-dependent uptake of single-stranded DNA by duplex DNA, and the ATP-dependent hybridization of homologous single-stranded DNAs. It interacts with LexA causing its activation and leading to its autocatalytic cleavage. This Francisella tularensis subsp. novicida (strain U112) protein is Protein RecA.